Consider the following 201-residue polypeptide: 3-isopropylmalate dehydratase small subunit (201 aa).

It belongs to the LeuD family. LeuD type 1 subfamily. In terms of assembly, heterodimer of LeuC and LeuD.

It catalyses the reaction (2R,3S)-3-isopropylmalate = (2S)-2-isopropylmalate. It participates in amino-acid biosynthesis; L-leucine biosynthesis; L-leucine from 3-methyl-2-oxobutanoate: step 2/4. Functionally, catalyzes the isomerization between 2-isopropylmalate and 3-isopropylmalate, via the formation of 2-isopropylmaleate. The polypeptide is 3-isopropylmalate dehydratase small subunit (Shigella dysenteriae serotype 1 (strain Sd197)).